Consider the following 252-residue polypeptide: Neurotrophic factor BDNF precursor form (252 aa).

Residues 1–18 form the signal peptide; the sequence is MTILFLTMVISYFGCMKA. A propeptide spanning residues 19–133 is cleaved from the precursor; it reads APMKEANVRG…AANMSMRVRR (115 aa). Residues 43–62 are disordered; sequence LESVNGPKAGSRGLTSSSSS. Asparagine 126 carries an N-linked (GlcNAc...) asparagine glycan. Intrachain disulfides connect cysteine 146–cysteine 213, cysteine 191–cysteine 242, and cysteine 201–cysteine 244.

The protein belongs to the NGF-beta family. Monomers and homodimers. Binds to NTRK2/TRKB. Can form heterodimers with other neurotrophin family members, such as NTF3 and NTF4 (in vitro), but the physiological relevance of this is not clear. BDNF precursor form: interacts with the heterodimer formed by NGFR and SORCS2. Mature BDNF has much lower affinity for the heterodimer formed by NGFR and SORCS2. Post-translationally, N-glycosylated and glycosulfated, contrary to mature BDNF. In terms of processing, mature BDNF is produced by proteolytic removal of the propeptide, catalyzed by a FURIN family member. In addition, the precursor form is proteolytically cleaved within the propeptide, but this is not an obligatory intermediate for the production of mature BDNF. Can be converted into mature BDNF by plasmin (PLG). In terms of tissue distribution, brain and central nervous system.

It localises to the secreted. Important signaling molecule that activates signaling cascades downstream of NTRK2. During development, promotes the survival and differentiation of selected neuronal populations of the peripheral and central nervous systems. Participates in axonal growth, pathfinding and in the modulation of dendritic growth and morphology. Major regulator of synaptic transmission and plasticity at adult synapses in many regions of the CNS. The versatility of BDNF is emphasized by its contribution to a range of adaptive neuronal responses including long-term potentiation (LTP), long-term depression (LTD), certain forms of short-term synaptic plasticity, as well as homeostatic regulation of intrinsic neuronal excitability. In terms of biological role, important signaling molecule that activates signaling cascades downstream of NTRK2. Activates signaling cascades via the heterodimeric receptor formed by NGFR and SORCS2. Signaling via NGFR and SORCS2 plays a role in synaptic plasticity and long-term depression (LTD). Binding to NGFR and SORCS2 promotes neuronal apoptosis. Promotes neuronal growth cone collapse. In Sus scrofa (Pig), this protein is Neurotrophic factor BDNF precursor form (BDNF).